A 406-amino-acid chain; its full sequence is Elongation factor Tu (406 aa).

The region spanning 10–215 (KPHVNVGTIG…AIDEYIPTPV (206 aa)) is the tr-type G domain. Positions 19-26 (GHVDHGKT) are G1. 19-26 (GHVDHGKT) is a GTP binding site. T26 serves as a coordination point for Mg(2+). The segment at 61-65 (GITIN) is G2. Residues 82–85 (DCPG) are G3. Residues 82–86 (DCPGH) and 137–140 (NKVD) each bind GTP. The G4 stretch occupies residues 137–140 (NKVD). Positions 175-177 (SAL) are G5.

It belongs to the TRAFAC class translation factor GTPase superfamily. Classic translation factor GTPase family. EF-Tu/EF-1A subfamily. As to quaternary structure, monomer.

The protein localises to the cytoplasm. The enzyme catalyses GTP + H2O = GDP + phosphate + H(+). In terms of biological role, GTP hydrolase that promotes the GTP-dependent binding of aminoacyl-tRNA to the A-site of ribosomes during protein biosynthesis. This Thermus aquaticus protein is Elongation factor Tu.